Here is a 129-residue protein sequence, read N- to C-terminus: Small ribosomal subunit protein uS11 (129 aa).

This sequence belongs to the universal ribosomal protein uS11 family. In terms of assembly, part of the 30S ribosomal subunit. Interacts with proteins S7 and S18. Binds to IF-3.

Located on the platform of the 30S subunit, it bridges several disparate RNA helices of the 16S rRNA. Forms part of the Shine-Dalgarno cleft in the 70S ribosome. This Lysinibacillus sphaericus (strain C3-41) protein is Small ribosomal subunit protein uS11.